Here is a 518-residue protein sequence, read N- to C-terminus: Lysine 5,6-aminomutase alpha subunit (518 aa).

Residues 184-189 (RTTGQS), S238, Y263, R268, and N299 contribute to the pyridoxal 5'-phosphate site.

Belongs to the KamD family. Heterotetramer of 2 alpha and 2 beta subunits. It depends on adenosylcob(III)alamin as a cofactor. Pyridoxal 5'-phosphate serves as cofactor.

It catalyses the reaction (3S)-3,6-diaminohexanoate = (3S,5S)-3,5-diaminohexanoate. The enzyme catalyses D-lysine = (2R,5S)-2,5-diaminohexanoate. It functions in the pathway amino-acid degradation; L-lysine degradation via acetate pathway. Catalyzes the migration of the L-beta-lysine and D-lysine epsilon amino group to the delta carbon to produce 3,5-diaminohexanoate and 2,5-diaminohexanoate, respectively. The polypeptide is Lysine 5,6-aminomutase alpha subunit (Fusobacterium nucleatum subsp. nucleatum (strain ATCC 25586 / DSM 15643 / BCRC 10681 / CIP 101130 / JCM 8532 / KCTC 2640 / LMG 13131 / VPI 4355)).